Here is a 384-residue protein sequence, read N- to C-terminus: Intraflagellar transport protein 46 homolog (384 aa).

2 disordered regions span residues 52–151 and 358–384; these read VNAE…PADY and SATD…LTLD. Residues 87-99 show a composition bias toward basic and acidic residues; it reads EKLEEDTKRKKEP. The segment covering 110–138 has biased composition (acidic residues); that stretch reads DEEEDEDDDDDDDDDDSDDTESDEEEEEP. Residues 358–374 show a composition bias toward polar residues; that stretch reads SATDGQKSDTPPASRSA.

Belongs to the IFT46 family.

The protein resides in the cytoplasm. The protein localises to the cytoskeleton. It localises to the cilium basal body. Its subcellular location is the cell projection. It is found in the cilium. Its function is as follows. Forms part of a complex involved in intraflagellar transport (IFT), the bi-directional movement of particles required for the assembly, maintenance and functioning of primary cilia. Plays a role in early embryonic development. The polypeptide is Intraflagellar transport protein 46 homolog (Danio rerio (Zebrafish)).